The primary structure comprises 377 residues: Citrate synthase (377 aa).

Active-site residues include His220, His259, and Asp313.

This sequence belongs to the citrate synthase family. As to quaternary structure, homodimer.

The catalysed reaction is oxaloacetate + acetyl-CoA + H2O = citrate + CoA + H(+). It functions in the pathway carbohydrate metabolism; tricarboxylic acid cycle; isocitrate from oxaloacetate: step 1/2. Its function is as follows. Might regulate the synthesis and function of enzymes involved in later enzymatic steps of Krebs cycle. Loss in activity results in sporulation defect. This is Citrate synthase (gltA) from Deinococcus radiodurans (strain ATCC 13939 / DSM 20539 / JCM 16871 / CCUG 27074 / LMG 4051 / NBRC 15346 / NCIMB 9279 / VKM B-1422 / R1).